Here is a 383-residue protein sequence, read N- to C-terminus: S-adenosylmethionine synthase (383 aa).

Residue histidine 15 coordinates ATP. Mg(2+) is bound at residue aspartate 17. A K(+)-binding site is contributed by glutamate 43. Positions 56 and 99 each coordinate L-methionine. The segment at 99 to 109 is flexible loop; it reads QSQDINQGVDR. Residues 164-166, 230-231, aspartate 239, 245-246, alanine 262, and lysine 266 each bind ATP; these read DAK, RF, and RK. Aspartate 239 is an L-methionine binding site. Lysine 270 is an L-methionine binding site.

Belongs to the AdoMet synthase family. Homotetramer; dimer of dimers. It depends on Mg(2+) as a cofactor. The cofactor is K(+).

Its subcellular location is the cytoplasm. It catalyses the reaction L-methionine + ATP + H2O = S-adenosyl-L-methionine + phosphate + diphosphate. Its pathway is amino-acid biosynthesis; S-adenosyl-L-methionine biosynthesis; S-adenosyl-L-methionine from L-methionine: step 1/1. Functionally, catalyzes the formation of S-adenosylmethionine (AdoMet) from methionine and ATP. The overall synthetic reaction is composed of two sequential steps, AdoMet formation and the subsequent tripolyphosphate hydrolysis which occurs prior to release of AdoMet from the enzyme. This chain is S-adenosylmethionine synthase, found in Actinobacillus succinogenes (strain ATCC 55618 / DSM 22257 / CCUG 43843 / 130Z).